The sequence spans 323 residues: Transaldolase (323 aa).

Lys-133 functions as the Schiff-base intermediate with substrate in the catalytic mechanism.

Belongs to the transaldolase family. Type 1 subfamily. Monomer.

The catalysed reaction is D-sedoheptulose 7-phosphate + D-glyceraldehyde 3-phosphate = D-erythrose 4-phosphate + beta-D-fructose 6-phosphate. Its pathway is carbohydrate degradation; pentose phosphate pathway; D-glyceraldehyde 3-phosphate and beta-D-fructose 6-phosphate from D-ribose 5-phosphate and D-xylulose 5-phosphate (non-oxidative stage): step 2/3. Transaldolase important for the balance of metabolites in the pentose-phosphate pathway. Involved in xylose fermentation to ethanol. The protein is Transaldolase of Fusarium oxysporum f. sp. lycopersici (strain 4287 / CBS 123668 / FGSC 9935 / NRRL 34936) (Fusarium vascular wilt of tomato).